The chain runs to 213 residues: Agglutinin isolectin 2 (213 aa).

The N-terminal stretch at 1–27 (MRKMMSTMALTLGAAVFLAFAAATAQA) is a signal peptide. Glutamine 28 bears the Pyrrolidone carboxylic acid mark. Chitin-binding type-1 domains are found at residues 28 to 69 (QRCG…ACWT), 70 to 112 (SKRC…PCRA), 113 to 155 (DIKC…ACST), and 156 to 198 (DKPC…GCDA). 16 disulfides stabilise this stretch: cysteine 30-cysteine 45, cysteine 39-cysteine 51, cysteine 44-cysteine 58, cysteine 62-cysteine 67, cysteine 73-cysteine 88, cysteine 82-cysteine 94, cysteine 87-cysteine 101, cysteine 105-cysteine 110, cysteine 116-cysteine 131, cysteine 125-cysteine 137, cysteine 130-cysteine 144, cysteine 148-cysteine 153, cysteine 159-cysteine 174, cysteine 168-cysteine 180, cysteine 173-cysteine 187, and cysteine 191-cysteine 196. 37-39 (MEC) contacts substrate. 89–100 (SQYGHCGFGAEY) contributes to the substrate binding site. Residue 141–142 (SE) coordinates substrate. The propeptide occupies 199 to 213 (VFAGAITANSTLLAE).

As to quaternary structure, homodimer, u-shaped.

N-acetyl-D-glucosamine / N-acetyl-D-neuraminic acid binding lectin. This is Agglutinin isolectin 2 from Triticum aestivum (Wheat).